Here is a 1518-residue protein sequence, read N- to C-terminus: Probable serine/threonine-protein kinase HSL1 (1518 aa).

Disordered stretches follow at residues 1–43 (MTGH…GHLE) and 55–83 (RLSQPDSTVSVATKSSKRKSRDTVGPWKL). Residues 55 to 68 (RLSQPDSTVSVATK) show a composition bias toward polar residues. Residues 81–369 (WKLGKTLGKG…TQEILKHPLI (289 aa)) enclose the Protein kinase domain. Residues 87–95 (LGKGSSGRV) and Lys110 each bind ATP. Asp239 (proton acceptor) is an active-site residue. Residues 467–502 (LSSSSENKKSATESSVNEPRIEYASKTANNTGLRSE) form a disordered region. Over residues 492–501 (KTANNTGLRS) the composition is skewed to polar residues. Phosphoserine is present on Ser511. Positions 599–611 (SNSRLSLSASTSR) are enriched in low complexity. A disordered region spans residues 599–651 (SNSRLSLSASTSRETVHDNEMPLPQLPKSPSRYSLSRRAIHASPSTKSIHKSL). Phosphoserine occurs at positions 629 and 685. Positions 741-783 (EEEDNEKERDTQRQRQNDTKSSADTFTISGVSTNKENEGPEYP) are disordered. The segment covering 746 to 758 (EKERDTQRQRQND) has biased composition (basic and acidic residues). Polar residues predominate over residues 759 to 774 (TKSSADTFTISGVSTN). Phosphoserine occurs at positions 837 and 866. A compositionally biased stretch (basic and acidic residues) spans 856–876 (EQLQKKNDRPSPLKPIQHQEL). Disordered stretches follow at residues 856 to 898 (EQLQ…RRNI), 1005 to 1030 (DDKHLSVPQNQSRSVAMSHPLRKQSA), 1150 to 1170 (APSDEGSLNTSSSESDSRASV), and 1220 to 1243 (SPENPSNTHMQKRFSSTRGSRDSN). Residue Ser1220 is modified to Phosphoserine. The segment covering 1222–1243 (ENPSNTHMQKRFSSTRGSRDSN) has biased composition (polar residues). The residue at position 1250 (Ser1250) is a Phosphoserine. Positions 1259–1291 (EEDQDGHTSQADILESSMSYSKRRPSEESVNPK) are disordered. A compositionally biased stretch (polar residues) spans 1265 to 1278 (HTSQADILESSMSY). Phosphoserine occurs at positions 1284, 1287, and 1325.

This sequence belongs to the protein kinase superfamily. CAMK Ser/Thr protein kinase family. NIM1 subfamily.

It is found in the bud neck. It catalyses the reaction L-seryl-[protein] + ATP = O-phospho-L-seryl-[protein] + ADP + H(+). The enzyme catalyses L-threonyl-[protein] + ATP = O-phospho-L-threonyl-[protein] + ADP + H(+). The sequence is that of Probable serine/threonine-protein kinase HSL1 (HSL1) from Saccharomyces cerevisiae (strain ATCC 204508 / S288c) (Baker's yeast).